A 565-amino-acid chain; its full sequence is Periplasmic trehalase (565 aa).

The N-terminal stretch at 1–30 (MKSPAPSRPQKMALIPACIFLCFAALSVQA) is a signal peptide. Residues arginine 152, 159–160 (WD), asparagine 196, 205–207 (RSQ), 277–279 (RPE), and glycine 310 each bind substrate. Active-site proton donor/acceptor residues include aspartate 312 and glutamate 496. Residue glutamate 511 participates in substrate binding. Residues 539 to 565 (CDNVPATRPLSESTTQPVKQKEAEPTP) form a disordered region.

Belongs to the glycosyl hydrolase 37 family. Monomer.

It is found in the periplasm. The enzyme catalyses alpha,alpha-trehalose + H2O = alpha-D-glucose + beta-D-glucose. Its function is as follows. Provides the cells with the ability to utilize trehalose at high osmolarity by splitting it into glucose molecules that can subsequently be taken up by the phosphotransferase-mediated uptake system. The protein is Periplasmic trehalase of Escherichia coli O17:K52:H18 (strain UMN026 / ExPEC).